Reading from the N-terminus, the 743-residue chain is ABC-type transporter claG (743 aa).

2 N-linked (GlcNAc...) asparagine glycosylation sites follow: Asn-4 and Asn-30. Residues 124–144 (SILLDIFLVIVVSWPFPFAWI) traverse the membrane as a helical segment. Residue Asn-159 is glycosylated (N-linked (GlcNAc...) asparagine). An ABC transporter domain is found at 200–439 (VEFSGISMRP…FQDAGYTFPL (240 aa)). 234–241 (GPSGSGKS) lines the ATP pocket. A run of 5 helical transmembrane segments spans residues 507 to 527 (YPSFVLEILTGAGCGILIGLS), 560 to 580 (GMLLCLTIGCAAGPAGVKTFG), 611 to 631 (IFLSALHFTSFYLILTTPIVS), 636 to 656 (LIVNLLYFYCIYGAASMISAI), and 661 to 681 (NGPLITMLTSVLFCALSGCAP).

Belongs to the ABC transporter superfamily. ABCG family.

It is found in the membrane. Functionally, ABC-type transporter; part of the cla gene cluster that produces clavatol and ortho-quinone methide. The clavatol biosynthesis cluster cla and the terrestric acid cluster tra are both involved in the production of peniphenones and penilactones. The chain is ABC-type transporter claG from Penicillium crustosum (Blue mold fungus).